We begin with the raw amino-acid sequence, 222 residues long: Probable translocation protein y4yL (222 aa).

Transmembrane regions (helical) follow at residues Pro-6 to Val-26, Pro-52 to Ala-72, Ile-158 to Met-178, and Met-182 to Ile-202.

Belongs to the FliP/MopC/SpaP family.

It localises to the cell membrane. In terms of biological role, could be involved in the secretion of an unknown factor. The chain is Probable translocation protein y4yL from Sinorhizobium fredii (strain NBRC 101917 / NGR234).